The primary structure comprises 271 residues: Formamidopyrimidine-DNA glycosylase (271 aa).

Pro-2 serves as the catalytic Schiff-base intermediate with DNA. Residue Glu-3 is the Proton donor of the active site. Residue Lys-58 is the Proton donor; for beta-elimination activity of the active site. The DNA site is built by His-91, Arg-110, and Arg-152. An FPG-type zinc finger spans residues 237–271 (RVYGRTGLACMACETPVKQIVQGNRSTYYCPACQR). The Proton donor; for delta-elimination activity role is filled by Arg-261.

The protein belongs to the FPG family. Monomer. Zn(2+) is required as a cofactor.

The catalysed reaction is Hydrolysis of DNA containing ring-opened 7-methylguanine residues, releasing 2,6-diamino-4-hydroxy-5-(N-methyl)formamidopyrimidine.. It catalyses the reaction 2'-deoxyribonucleotide-(2'-deoxyribose 5'-phosphate)-2'-deoxyribonucleotide-DNA = a 3'-end 2'-deoxyribonucleotide-(2,3-dehydro-2,3-deoxyribose 5'-phosphate)-DNA + a 5'-end 5'-phospho-2'-deoxyribonucleoside-DNA + H(+). In terms of biological role, involved in base excision repair of DNA damaged by oxidation or by mutagenic agents. Acts as a DNA glycosylase that recognizes and removes damaged bases. Has a preference for oxidized purines, such as 7,8-dihydro-8-oxoguanine (8-oxoG). Has AP (apurinic/apyrimidinic) lyase activity and introduces nicks in the DNA strand. Cleaves the DNA backbone by beta-delta elimination to generate a single-strand break at the site of the removed base with both 3'- and 5'-phosphates. This is Formamidopyrimidine-DNA glycosylase from Thioalkalivibrio sulfidiphilus (strain HL-EbGR7).